We begin with the raw amino-acid sequence, 413 residues long: Tryptophan synthase beta chain (413 aa).

Residue lysine 106 is modified to N6-(pyridoxal phosphate)lysine.

It belongs to the TrpB family. In terms of assembly, tetramer of two alpha and two beta chains. The cofactor is pyridoxal 5'-phosphate.

It catalyses the reaction (1S,2R)-1-C-(indol-3-yl)glycerol 3-phosphate + L-serine = D-glyceraldehyde 3-phosphate + L-tryptophan + H2O. It functions in the pathway amino-acid biosynthesis; L-tryptophan biosynthesis; L-tryptophan from chorismate: step 5/5. In terms of biological role, the beta subunit is responsible for the synthesis of L-tryptophan from indole and L-serine. The chain is Tryptophan synthase beta chain from Methylorubrum populi (strain ATCC BAA-705 / NCIMB 13946 / BJ001) (Methylobacterium populi).